The sequence spans 539 residues: 4-hydroxybenzoate--CoA/benzoate--CoA ligase (539 aa).

It belongs to the ATP-dependent AMP-binding enzyme family. Benzoate-CoA ligase subfamily. As to quaternary structure, homodimer. The N-terminus is blocked.

The enzyme catalyses 4-hydroxybenzoate + ATP + CoA = 4-hydroxybenzoyl-CoA + AMP + diphosphate. It carries out the reaction benzoate + ATP + CoA = benzoyl-CoA + AMP + diphosphate. Functionally, catalyzes the ligation of 4-hydroxybenzoate, benzoate or cyclohex-1,4-dienecarboxylate and CoA at the expense of ATP. The enzyme shows low activity towards cyclo-2,5-dienecarboxylate, 4-fluorobenzoate, 4-chlorobenzoate and 2-methoxybenzoate. The polypeptide is 4-hydroxybenzoate--CoA/benzoate--CoA ligase (hbaA) (Rhodopseudomonas palustris (strain ATCC BAA-98 / CGA009)).